Reading from the N-terminus, the 251-residue chain is Zinc import ATP-binding protein ZnuC (251 aa).

Residues 5–220 (VSLENVSVSF…PEFISMFGPR (216 aa)) form the ABC transporter domain. 37–44 (GPNGAGKS) serves as a coordination point for ATP.

This sequence belongs to the ABC transporter superfamily. Zinc importer (TC 3.A.1.15.5) family. In terms of assembly, the complex is composed of two ATP-binding proteins (ZnuC), two transmembrane proteins (ZnuB) and a solute-binding protein (ZnuA).

It localises to the cell inner membrane. The enzyme catalyses Zn(2+)(out) + ATP(in) + H2O(in) = Zn(2+)(in) + ADP(in) + phosphate(in) + H(+)(in). Its function is as follows. Part of the ABC transporter complex ZnuABC involved in zinc import. Responsible for energy coupling to the transport system. This Salmonella typhi protein is Zinc import ATP-binding protein ZnuC.